The primary structure comprises 153 residues: Transcriptional repressor NrdR 3 (153 aa).

The disordered stretch occupies residues Met-1–Arg-26. The segment at Cys-3–Cys-34 is a zinc-finger region. A compositionally biased stretch (basic and acidic residues) spans Gly-7–Ala-24. The 91-residue stretch at Leu-49–Asp-139 folds into the ATP-cone domain.

This sequence belongs to the NrdR family. The cofactor is Zn(2+).

In terms of biological role, negatively regulates transcription of bacterial ribonucleotide reductase nrd genes and operons by binding to NrdR-boxes. This is Transcriptional repressor NrdR 3 from Paramagnetospirillum magneticum (strain ATCC 700264 / AMB-1) (Magnetospirillum magneticum).